Consider the following 360-residue polypeptide: Phospho-N-acetylmuramoyl-pentapeptide-transferase (360 aa).

Transmembrane regions (helical) follow at residues 18–38 (VFSYVTFRAILGLLTALVFSL), 73–93 (TMGGLLILAGIFVSVLLWGDL), 97–117 (YVLVMLFVLGSFGTIGFIDDY), 134–154 (YILQSLAALVVAVFLYSSSTL), 168–188 (VMPQLGLVFIVLAYFTIVGAS), 199–219 (GLAIMPTVMVAGAFALIAYLS), 236–256 (AGELVIVCTAIVGAGLGFLWF), 263–283 (VFMGDVGSLALGAALGAIAVL), 288–308 (ILLVIMGGVFVMETVSVILQV), and 338–358 (VIVRFWIISLFLVLLGLATLK).

It belongs to the glycosyltransferase 4 family. MraY subfamily. Mg(2+) is required as a cofactor.

Its subcellular location is the cell inner membrane. The enzyme catalyses UDP-N-acetyl-alpha-D-muramoyl-L-alanyl-gamma-D-glutamyl-meso-2,6-diaminopimeloyl-D-alanyl-D-alanine + di-trans,octa-cis-undecaprenyl phosphate = di-trans,octa-cis-undecaprenyl diphospho-N-acetyl-alpha-D-muramoyl-L-alanyl-D-glutamyl-meso-2,6-diaminopimeloyl-D-alanyl-D-alanine + UMP. It participates in cell wall biogenesis; peptidoglycan biosynthesis. In terms of biological role, catalyzes the initial step of the lipid cycle reactions in the biosynthesis of the cell wall peptidoglycan: transfers peptidoglycan precursor phospho-MurNAc-pentapeptide from UDP-MurNAc-pentapeptide onto the lipid carrier undecaprenyl phosphate, yielding undecaprenyl-pyrophosphoryl-MurNAc-pentapeptide, known as lipid I. In Shewanella denitrificans (strain OS217 / ATCC BAA-1090 / DSM 15013), this protein is Phospho-N-acetylmuramoyl-pentapeptide-transferase.